The chain runs to 248 residues: MKTYVFIPARYGSSRLPGKPLKLINGKPMIQHVFERISKATGIEAVYVATDDDRIKEVVEKFGGNVVMTPPEAESGTDRIAQAAQALDLKEDDLIVNVQGDQPLVNQGSIEAVIAPFKAADYDGSFEMSTLSFKIVNEAEITSPKDVKLVTDVNGFALYFSRATIPHGRDYWDHDSYKHLGVYAYTKRFVDLFNTLPMGHLEDIEKLEQLRALEYGHKIKVVESEWDSPEVDLPGDIEMMEALLNAGH.

Belongs to the KdsB family.

The protein resides in the cytoplasm. It catalyses the reaction 3-deoxy-alpha-D-manno-oct-2-ulosonate + CTP = CMP-3-deoxy-beta-D-manno-octulosonate + diphosphate. Its pathway is nucleotide-sugar biosynthesis; CMP-3-deoxy-D-manno-octulosonate biosynthesis; CMP-3-deoxy-D-manno-octulosonate from 3-deoxy-D-manno-octulosonate and CTP: step 1/1. It participates in bacterial outer membrane biogenesis; lipopolysaccharide biosynthesis. In terms of biological role, activates KDO (a required 8-carbon sugar) for incorporation into bacterial lipopolysaccharide in Gram-negative bacteria. This Hydrogenovibrio crunogenus (strain DSM 25203 / XCL-2) (Thiomicrospira crunogena) protein is 3-deoxy-manno-octulosonate cytidylyltransferase 2.